We begin with the raw amino-acid sequence, 188 residues long: HGPRTase-like protein 1 (188 aa).

This sequence belongs to the purine/pyrimidine phosphoribosyltransferase family. Archaeal HPRT subfamily.

Functionally, may catalyze a purine salvage reaction, the substrate is unknown. The chain is HGPRTase-like protein 1 from Haloquadratum walsbyi (strain DSM 16854 / JCM 12705 / C23).